A 220-amino-acid polypeptide reads, in one-letter code: RPA-interacting protein B (220 aa).

Residues 1 to 45 (MEAERRHRALYKGTTPPWKETYRKRCVERLKSNRSKLLDKFRQVG) form an interaction with importin beta region. The interval 49 to 165 (HGGVGGSFLV…QCGVYINTQS (117 aa)) is interaction with RPA1. Residues 138-213 (CPVCNRNYLT…ASLFMSCQEC (76 aa)) form an RIP-type zinc finger.

Interacts directly with the RPA1 subunit of RPA complex. Interacts with importin beta, but not with importin alpha. Forms a complex with the RPA complex and importin beta, which is dissociated by Ran-GTP.

The protein localises to the nucleus. In terms of biological role, mediates the import of RPA complex into the nucleus, via its interaction with importin beta. This Xenopus laevis (African clawed frog) protein is RPA-interacting protein B (rpain-b).